Here is a 384-residue protein sequence, read N- to C-terminus: 1-deoxy-D-xylulose 5-phosphate reductoisomerase (384 aa).

Positions 10, 11, 12, 13, 36, and 122 each coordinate NADPH. Lysine 123 serves as a coordination point for 1-deoxy-D-xylulose 5-phosphate. Glutamate 124 provides a ligand contact to NADPH. Aspartate 148 contacts Mn(2+). 4 residues coordinate 1-deoxy-D-xylulose 5-phosphate: serine 149, glutamate 150, serine 174, and histidine 197. Residue glutamate 150 coordinates Mn(2+). Residue glycine 203 participates in NADPH binding. 1-deoxy-D-xylulose 5-phosphate-binding residues include serine 210, asparagine 215, lysine 216, and glutamate 219. Position 219 (glutamate 219) interacts with Mn(2+).

The protein belongs to the DXR family. It depends on Mg(2+) as a cofactor. Mn(2+) serves as cofactor.

It carries out the reaction 2-C-methyl-D-erythritol 4-phosphate + NADP(+) = 1-deoxy-D-xylulose 5-phosphate + NADPH + H(+). Its pathway is isoprenoid biosynthesis; isopentenyl diphosphate biosynthesis via DXP pathway; isopentenyl diphosphate from 1-deoxy-D-xylulose 5-phosphate: step 1/6. In terms of biological role, catalyzes the NADPH-dependent rearrangement and reduction of 1-deoxy-D-xylulose-5-phosphate (DXP) to 2-C-methyl-D-erythritol 4-phosphate (MEP). This chain is 1-deoxy-D-xylulose 5-phosphate reductoisomerase, found in Chlorobium phaeobacteroides (strain DSM 266 / SMG 266 / 2430).